Here is a 243-residue protein sequence, read N- to C-terminus: RNA-binding protein with serine-rich domain 1 homolog (243 aa).

The interval 48–92 (SSTRQFNNTRSPSGRSASRSSNFSHRSSSRDSFSSNRSYSSSLSR) is disordered. Positions 57–92 (RSPSGRSASRSSNFSHRSSSRDSFSSNRSYSSSLSR) are enriched in low complexity. The RRM domain occupies 99 to 177 (RTILVENLTR…EELFVSIKRF (79 aa)). The tract at residues 189–243 (YENSYRPSRSQNNSHYNDKSFHRSRYSRARSRSPGSNISEYSDQSPPYHSYRHRP) is disordered. Residues 193 to 203 (YRPSRSQNNSH) are compositionally biased toward polar residues. A compositionally biased stretch (basic residues) spans 210 to 219 (HRSRYSRARS). The segment covering 222-235 (PGSNISEYSDQSPP) has biased composition (polar residues).

This sequence belongs to the splicing factor SR family. In terms of assembly, component of the active spliceosome.

The protein localises to the cytoplasm. Its subcellular location is the nucleus. Its function is as follows. Putative component of the spliceosome which enhances the formation of the ATP-dependent A complex of the spliceosome. may participate in mRNA 3'-end cleavage. Also mediates increase of mRNA abundance and translational efficiency. This chain is RNA-binding protein with serine-rich domain 1 homolog, found in Schizosaccharomyces pombe (strain 972 / ATCC 24843) (Fission yeast).